The following is a 435-amino-acid chain: Chromosomal replication initiator protein DnaA (435 aa).

The interval 1 to 70 (MNIGEKILLL…KHLFEIQNSI (70 aa)) is domain I, interacts with DnaA modulators. The tract at residues 70 to 98 (IKVDVSILLKNQVESKKAEQKSVQKQQHS) is domain II. The interval 99 to 313 (LLNPSHTFEN…GILSKLHAYS (215 aa)) is domain III, AAA+ region. Positions 143, 145, 146, and 147 each coordinate ATP. Residues 314 to 435 (QLMHVDIDLQ…ELTNKITSSS (122 aa)) are domain IV, binds dsDNA.

Belongs to the DnaA family. As to quaternary structure, oligomerizes as a right-handed, spiral filament on DNA at oriC.

Its subcellular location is the cytoplasm. Functionally, plays an essential role in the initiation and regulation of chromosomal replication. ATP-DnaA binds to the origin of replication (oriC) to initiate formation of the DNA replication initiation complex once per cell cycle. Binds the DnaA box (a 9 base pair repeat at the origin) and separates the double-stranded (ds)DNA. Forms a right-handed helical filament on oriC DNA; dsDNA binds to the exterior of the filament while single-stranded (ss)DNA is stabiized in the filament's interior. The ATP-DnaA-oriC complex binds and stabilizes one strand of the AT-rich DNA unwinding element (DUE), permitting loading of DNA polymerase. After initiation quickly degrades to an ADP-DnaA complex that is not apt for DNA replication. Binds acidic phospholipids. The chain is Chromosomal replication initiator protein DnaA from Sulfurimonas denitrificans (strain ATCC 33889 / DSM 1251) (Thiomicrospira denitrificans (strain ATCC 33889 / DSM 1251)).